The chain runs to 139 residues: Cuticle protein 6 (139 aa).

Gln-1 is subject to Pyrrolidone carboxylic acid. One can recognise a Chitin-binding type R&amp;R domain in the interval 31-92 (LGQFAFHHAG…VGANNLPEAP (62 aa)).

The polypeptide is Cuticle protein 6 (Blaberus craniifer (Death's head cockroach)).